Reading from the N-terminus, the 114-residue chain is MINTNPKRSNEPPVWLLFSAGGMISALAFPVLILILGILLPLGIISPDGIIAFAHHWFGKLVILVLTIFPAWAGLHRIHHGMHDIKVHVPSGGLIFYGLAVLYTVVAIWGVASI.

3 helical membrane passes run 24 to 44, 49 to 69, and 94 to 114; these read ISAL…PLGI, GIIA…LTIF, and LIFY…VASI.

This sequence belongs to the FrdD family. As to quaternary structure, part of an enzyme complex containing four subunits: a flavoprotein (FrdA), an iron-sulfur protein (FrdB), and two hydrophobic anchor proteins (FrdC and FrdD).

The protein resides in the cell inner membrane. Its function is as follows. Anchors the catalytic components of the fumarate reductase complex to the cell membrane, binds quinones. This is Fumarate reductase subunit D from Actinobacillus succinogenes (strain ATCC 55618 / DSM 22257 / CCUG 43843 / 130Z).